The chain runs to 44 residues: Protein non-structural 7b (44 aa).

The chain crosses the membrane as a helical span at residues 9-29; sequence FYLCFLAFLLFLVLIMLIIFW.

It localises to the host membrane. The protein is Protein non-structural 7b of Homo sapiens (Human).